The following is a 293-amino-acid chain: Ethanolamine ammonia-lyase small subunit (293 aa).

Adenosylcob(III)alamin contacts are provided by V207 and E228.

The protein belongs to the EutC family. As to quaternary structure, the basic unit is a heterodimer which dimerizes to form tetramers. The heterotetramers trimerize; 6 large subunits form a core ring with 6 small subunits projecting outwards. The cofactor is adenosylcob(III)alamin.

The protein localises to the bacterial microcompartment. The enzyme catalyses ethanolamine = acetaldehyde + NH4(+). Its pathway is amine and polyamine degradation; ethanolamine degradation. In terms of biological role, catalyzes the deamination of various vicinal amino-alcohols to oxo compounds. Allows this organism to utilize ethanolamine as the sole source of nitrogen and carbon in the presence of external vitamin B12. This chain is Ethanolamine ammonia-lyase small subunit, found in Clostridioides difficile (strain 630) (Peptoclostridium difficile).